A 118-amino-acid chain; its full sequence is Cycloviolacin-O8 (118 aa).

Positions 1–22 (MEMKNMVVGLFLIAAFALPALA) are cleaved as a signal peptide. Positions 23–84 (TNFEKDFITH…THSNSINALG (62 aa)) are excised as a propeptide. The segment at residues 85-115 (GTLPCGESCVWIPCISSVVGCSCKSKVCYKN) is a cross-link (cyclopeptide (Gly-Asn)). 3 cysteine pairs are disulfide-bonded: cysteine 89–cysteine 105, cysteine 93–cysteine 107, and cysteine 98–cysteine 112. Residues 116–118 (SLA) constitute a propeptide that is removed on maturation.

Post-translationally, cycloviolacin-O8 is a cyclic peptide. Expressed in leaves, petals, petioles and roots but not in runners (at protein level).

In terms of biological role, probably participates in a plant defense mechanism. The chain is Cycloviolacin-O8 (Voc1) from Viola odorata (Sweet violet).